Reading from the N-terminus, the 375-residue chain is 23S rRNA (uracil(747)-C(5))-methyltransferase RlmC (375 aa).

[4Fe-4S] cluster is bound by residues Cys3, Cys11, Cys14, and Cys87. The S-adenosyl-L-methionine site is built by Gln212, Phe241, Glu262, and Asn307. Cys334 (nucleophile) is an active-site residue.

The protein belongs to the class I-like SAM-binding methyltransferase superfamily. RNA M5U methyltransferase family. RlmC subfamily.

The enzyme catalyses uridine(747) in 23S rRNA + S-adenosyl-L-methionine = 5-methyluridine(747) in 23S rRNA + S-adenosyl-L-homocysteine + H(+). Functionally, catalyzes the formation of 5-methyl-uridine at position 747 (m5U747) in 23S rRNA. The protein is 23S rRNA (uracil(747)-C(5))-methyltransferase RlmC of Escherichia coli (strain SMS-3-5 / SECEC).